The chain runs to 448 residues: MLTSETQNVWTQFLQFVKTRCSPAAFGNWLAPIRVIDCSTEEVTLEIPNIFVQEYLLSNYKKDLCAFLPVDMSGEPAIRFIIAPPQKKIIPPNHFSISSSQKEEQSPNSDVKLNNNYRFENFIEGPTNQFVKSAAMGVALRPGQSYNPLFIHGGVGLGKTHILHSIGHYIKENHKKLRVQCITTEAFINDLVDSLRNKSVDRMKKFYRSEIDVLLVDDIQFLQNRLNFEEELSYTFEALKNKGAQIVITSDKPPSLLKLSERTIGKMEGGLVAHMGIPELETRVAILQYKAEQKGLHIPHKVAFFIAEHIHNNVRQLEGAINRLSAHCRLLDLNITEELVSRTLREMLQQAPREKISVEQILKSVAAVFQVRVSDLRGSTRTKDIALPRQVAMYLAKEMINESLIMLGASFGKTHSTILHACKNIEKKVASDETLRRQIGMVRRNIES.

Positions 1–76 (MLTSETQNVW…FLPVDMSGEP (76 aa)) are domain I, interacts with DnaA modulators. Residues 76–111 (PAIRFIIAPPQKKIIPPNHFSISSSQKEEQSPNSDV) are domain II. The domain III, AAA+ region stretch occupies residues 112–328 (KLNNNYRFEN…GAINRLSAHC (217 aa)). G156, G158, K159, and T160 together coordinate ATP. The segment at 329–448 (RLLDLNITEE…IGMVRRNIES (120 aa)) is domain IV, binds dsDNA.

The protein belongs to the DnaA family. Oligomerizes as a right-handed, spiral filament on DNA at oriC.

The protein localises to the cytoplasm. Functionally, plays an essential role in the initiation and regulation of chromosomal replication. ATP-DnaA binds to the origin of replication (oriC) to initiate formation of the DNA replication initiation complex once per cell cycle. Binds the DnaA box (a 9 base pair repeat at the origin) and separates the double-stranded (ds)DNA. Forms a right-handed helical filament on oriC DNA; dsDNA binds to the exterior of the filament while single-stranded (ss)DNA is stabiized in the filament's interior. The ATP-DnaA-oriC complex binds and stabilizes one strand of the AT-rich DNA unwinding element (DUE), permitting loading of DNA polymerase. After initiation quickly degrades to an ADP-DnaA complex that is not apt for DNA replication. Binds acidic phospholipids. The polypeptide is Chromosomal replication initiator protein DnaA 1 (Protochlamydia amoebophila (strain UWE25)).